A 377-amino-acid polypeptide reads, in one-letter code: Ejaculatory bulb-specific protein 1 (377 aa).

The N-terminal stretch at 1-20 is a signal peptide; the sequence is MVRQLILVLSLILFCGSSHA. The interval 155-253 is disordered; it reads PIRPGGLFPG…NRPGRPFPGG (99 aa). Residues 165–228 are compositionally biased toward pro residues; that stretch reads GPSPGGPSPG…GGSPPSPGGP (64 aa).

As to expression, specifically expressed in the ejaculatory bulb and seminal fluid. Detected in mated females 3 minutes after the start of mating, and for at least 3 hours after the start of mating.

The protein localises to the secreted. Its function is as follows. Major protein component of the posterior mating plug. Accessory gland proteins constitute, or are required for formation of the anterior mating plug. Posterior mating plug forms before sperm transfer and the anterior mating plug is formed after the start of mating. The chain is Ejaculatory bulb-specific protein 1 from Drosophila melanogaster (Fruit fly).